A 514-amino-acid polypeptide reads, in one-letter code: Transmembrane protein 117 (514 aa).

Topologically, residues methionine 1 to arginine 15 are cytoplasmic. A helical membrane pass occupies residues methionine 16–serine 36. Topologically, residues histidine 37–arginine 65 are extracellular. The chain crosses the membrane as a helical span at residues isoleucine 66–leucine 86. The Cytoplasmic portion of the chain corresponds to phenylalanine 87–threonine 110. The chain crosses the membrane as a helical span at residues methionine 111–leucine 131. Residues methionine 132–lysine 154 lie on the Extracellular side of the membrane. A helical transmembrane segment spans residues leucine 155–methionine 175. At leucine 176–arginine 198 the chain is on the cytoplasmic side. The helical transmembrane segment at isoleucine 199 to threonine 219 threads the bilayer. The Extracellular segment spans residues aspartate 220–arginine 239. A helical membrane pass occupies residues alanine 240–phenylalanine 260. The Cytoplasmic segment spans residues proline 261–arginine 295. A helical transmembrane segment spans residues isoleucine 296 to leucine 316. Over asparagine 317 to cysteine 394 the chain is Extracellular. Asparagine 353 and asparagine 371 each carry an N-linked (GlcNAc...) asparagine glycan. The chain crosses the membrane as a helical span at residues leucine 395–glycine 415. The Cytoplasmic portion of the chain corresponds to arginine 416–asparagine 514. Disordered stretches follow at residues lysine 429–aspartate 459 and glutamate 486–asparagine 514. The segment covering serine 438–isoleucine 448 has biased composition (basic and acidic residues). Threonine 453 is subject to Phosphothreonine.

This sequence belongs to the TMEM117 family.

Its subcellular location is the cell membrane. In terms of biological role, involved in endoplasmic reticulum (ER) stress-induced cell death pathway. The protein is Transmembrane protein 117 (TMEM117) of Homo sapiens (Human).